A 160-amino-acid polypeptide reads, in one-letter code: MLSPKRTKFRKQHRGRMRGVASKGNTIAFGQFALQAQDCGWVTARQIEASRRAMTRYIKRGGQIWIRIFPDKPVTMRPAETRMGSGKGNPEFWVAVVKPGRILFEMGGEDITEEVAKEAMRLAQYKLPVKTKFISIDKNLEAPSQEKTKNSKKSQEEVKQ.

The segment at 138 to 160 (KNLEAPSQEKTKNSKKSQEEVKQ) is disordered.

Belongs to the universal ribosomal protein uL16 family. In terms of assembly, part of the 50S ribosomal subunit.

Binds 23S rRNA and is also seen to make contacts with the A and possibly P site tRNAs. This Prochlorococcus marinus (strain MIT 9215) protein is Large ribosomal subunit protein uL16.